A 123-amino-acid polypeptide reads, in one-letter code: Immunoglobulin lambda variable 5-39 (123 aa).

A signal peptide spans 1–19 (MAWTPLLLLLLSHCTGSLS). The framework-1 stretch occupies residues 20–44 (QPVLTQPTSLSASPGASARFTCTLR). Positions 21–123 (PVLTQPTSLS…YCAIWYSSTS (103 aa)) constitute an Ig-like domain. An intrachain disulfide couples C41 to C115. Positions 45–53 (SGINVGTYR) are complementarity-determining-1. The segment at 54 to 70 (IYWYQQKPGSLPRYLLR) is framework-2. Residues 71–77 (YKSDSDK) form a complementarity-determining-2 region. Positions 78-115 (QQGSGVPSRFSGSKDASTNAGLLLISGLQSEDEADYYC) are framework-3. Residues 116 to 123 (AIWYSSTS) are complementarity-determining-3.

As to quaternary structure, immunoglobulins are composed of two identical heavy chains and two identical light chains; disulfide-linked.

The protein localises to the secreted. It is found in the cell membrane. In terms of biological role, v region of the variable domain of immunoglobulin light chains that participates in the antigen recognition. Immunoglobulins, also known as antibodies, are membrane-bound or secreted glycoproteins produced by B lymphocytes. In the recognition phase of humoral immunity, the membrane-bound immunoglobulins serve as receptors which, upon binding of a specific antigen, trigger the clonal expansion and differentiation of B lymphocytes into immunoglobulins-secreting plasma cells. Secreted immunoglobulins mediate the effector phase of humoral immunity, which results in the elimination of bound antigens. The antigen binding site is formed by the variable domain of one heavy chain, together with that of its associated light chain. Thus, each immunoglobulin has two antigen binding sites with remarkable affinity for a particular antigen. The variable domains are assembled by a process called V-(D)-J rearrangement and can then be subjected to somatic hypermutations which, after exposure to antigen and selection, allow affinity maturation for a particular antigen. This chain is Immunoglobulin lambda variable 5-39, found in Homo sapiens (Human).